The following is a 302-amino-acid chain: Oxygen-dependent coproporphyrinogen-III oxidase (302 aa).

Ser-94 contributes to the substrate binding site. A divalent metal cation is bound by residues His-98 and His-108. The Proton donor role is filled by His-108. 110-112 (NVR) contacts substrate. A divalent metal cation is bound by residues His-147 and His-177. An important for dimerization region spans residues 242–277 (YVEFNLVWDRGTLFGLQSGGRTESILMSMPPLARWE). A substrate-binding site is contributed by 260-262 (GGR).

Belongs to the aerobic coproporphyrinogen-III oxidase family. In terms of assembly, homodimer. It depends on a divalent metal cation as a cofactor.

It is found in the cytoplasm. It carries out the reaction coproporphyrinogen III + O2 + 2 H(+) = protoporphyrinogen IX + 2 CO2 + 2 H2O. Its pathway is porphyrin-containing compound metabolism; protoporphyrin-IX biosynthesis; protoporphyrinogen-IX from coproporphyrinogen-III (O2 route): step 1/1. Involved in the heme biosynthesis. Catalyzes the aerobic oxidative decarboxylation of propionate groups of rings A and B of coproporphyrinogen-III to yield the vinyl groups in protoporphyrinogen-IX. This chain is Oxygen-dependent coproporphyrinogen-III oxidase, found in Photorhabdus laumondii subsp. laumondii (strain DSM 15139 / CIP 105565 / TT01) (Photorhabdus luminescens subsp. laumondii).